Consider the following 264-residue polypeptide: Apolipoprotein A-I (264 aa).

A signal peptide spans 1 to 18; it reads MKAVVLAVAVLFLTGSQA. 2 repeat units span residues 67–88 and 89–110. The tract at residues 67–264 is 10 X approximate tandem repeats; that stretch reads LNLLENWDTL…DQITKHVTTQ (198 aa). The residue at position 109 (Met-109) is a Methionine sulfoxide. One copy of the 3; half-length repeat lies at 111-121; it reads KDLEKVKKKVQ. A run of 3 repeats spans residues 122–143, 144–165, and 166–187. One copy of the 7; truncated repeat lies at 188–207; sequence TYTEEMGQILAERLGAIKES. Met-193 is subject to Methionine sulfoxide. Repeat unit 8 spans residues 208–229; that stretch reads TSLAEYQTKASEHLRTFSKKAK. Residues 230–240 form a 9; half-length repeat; sequence PILEDLRQGLL. Repeat unit 10 spans residues 241 to 264; it reads PVAENFKTNIKNTFDQITKHVTTQ.

The protein belongs to the apolipoprotein A1/A4/E family. As to quaternary structure, homodimer. Interacts with APOA1BP and CLU. Component of a sperm activating protein complex (SPAP), consisting of APOA1, an immunoglobulin heavy chain, an immunoglobulin light chain and albumin. Interacts with NDRG1. Interacts with SCGB3A2. Interacts with NAXE and YJEFN3. Glycosylated. In terms of processing, palmitoylated. Post-translationally, phosphorylation sites are present in the extracellular medium.

It localises to the secreted. Functionally, participates in the reverse transport of cholesterol from tissues to the liver for excretion by promoting cholesterol efflux from tissues and by acting as a cofactor for the lecithin cholesterol acyltransferase (LCAT). As part of the SPAP complex, activates spermatozoa motility. In Fukomys damarensis (Damaraland mole rat), this protein is Apolipoprotein A-I (Apoa1).